The chain runs to 292 residues: DCN1-like protein 4 (292 aa).

The disordered stretch occupies residues 43-83; it reads HQTGSLRSCSSSDCFNKVMPPRKKRRPASGDDLSAKKSRHD. Residues 45 to 56 show a composition bias toward polar residues; it reads TGSLRSCSSSDC. K95 participates in a covalent cross-link: Glycyl lysine isopeptide (Lys-Gly) (interchain with G-Cter in SUMO2). The region spanning 101–287 is the DCUN1 domain; sequence FSSKRCLEWF…LLDEFVEWYK (187 aa).

As to quaternary structure, interacts (via the DCUN1 domain) with the unneddylated cullins: interacts with CUL1, CUL2, CUL3, CUL4A, CUL4B and CUL5; these interactions promote the cullin neddylation and the identity of the cullin dictates the affinity of the interaction. Interacts with RBX1 and RNF7. Interacts with CAND1; this interaction is bridged by cullins such as CUL3 and strongly inhibits the neddylation of CUL3. These CAND-cullin-DCNL complexes can only be neddylated in the presence of a substrate adapter. Interacts (via DCUN1 domain) with UBE2M (N-terminally acetylated form) and probably with UBE2F (N-terminally acetylated form).

The protein localises to the nucleus. In terms of biological role, contributes to the neddylation of all cullins by transferring NEDD8 from N-terminally acetylated NEDD8-conjugating E2s enzyme to different cullin C-terminal domain-RBX complexes which are necessary for the activation of cullin-RING E3 ubiquitin ligases (CRLs). This is DCN1-like protein 4 from Homo sapiens (Human).